A 281-amino-acid polypeptide reads, in one-letter code: sn-glycerol-3-phosphate transport system permease protein UgpE (281 aa).

The next 6 membrane-spanning stretches (helical) occupy residues 16–36 (LILGIAVILFPLYVAFVAATL), 85–105 (FSITLGKITVSMLSAFAIVWF), 113–133 (FFWMIFITLMLPVEVRIFPTV), 142–162 (LDSYAGLTLPLMASATATFLF), 202–222 (ALFVITFIYGWNQYLWPLLII), and 247–267 (WNSVMAAMLLTLIPPVVIVLV). One can recognise an ABC transmembrane type-1 domain in the interval 77–268 (LLNSFVMAFS…IPPVVIVLVM (192 aa)).

This sequence belongs to the binding-protein-dependent transport system permease family. UgpAE subfamily. In terms of assembly, the complex is composed of two ATP-binding proteins (UgpC), two transmembrane proteins (UgpA and UgpE) and a solute-binding protein (UgpB).

The protein resides in the cell inner membrane. In terms of biological role, part of the ABC transporter complex UgpBAEC involved in sn-glycerol-3-phosphate (G3P) import. Probably responsible for the translocation of the substrate across the membrane. The polypeptide is sn-glycerol-3-phosphate transport system permease protein UgpE (ugpE) (Escherichia coli O6:K15:H31 (strain 536 / UPEC)).